The primary structure comprises 418 residues: UDP-N-acetylglucosamine 1-carboxyvinyltransferase (418 aa).

Residue 22–23 (KN) coordinates phosphoenolpyruvate. Arginine 93 serves as a coordination point for UDP-N-acetyl-alpha-D-glucosamine. Residue cysteine 117 is the Proton donor of the active site. A 2-(S-cysteinyl)pyruvic acid O-phosphothioketal modification is found at cysteine 117. UDP-N-acetyl-alpha-D-glucosamine is bound by residues aspartate 305 and valine 327.

The protein belongs to the EPSP synthase family. MurA subfamily.

The protein resides in the cytoplasm. The catalysed reaction is phosphoenolpyruvate + UDP-N-acetyl-alpha-D-glucosamine = UDP-N-acetyl-3-O-(1-carboxyvinyl)-alpha-D-glucosamine + phosphate. The protein operates within cell wall biogenesis; peptidoglycan biosynthesis. Functionally, cell wall formation. Adds enolpyruvyl to UDP-N-acetylglucosamine. In Alkalilimnicola ehrlichii (strain ATCC BAA-1101 / DSM 17681 / MLHE-1), this protein is UDP-N-acetylglucosamine 1-carboxyvinyltransferase.